Here is a 346-residue protein sequence, read N- to C-terminus: Selenide, water dikinase (346 aa).

Sec17 is a catalytic residue. A non-standard amino acid (selenocysteine) is located at residue Sec17. ATP contacts are provided by residues Lys20 and 47–49; that span reads TSD. Asp50 contacts Mg(2+). Residues Asp67, Asp90, and 138–140 contribute to the ATP site; that span reads GHT. Asp90 contacts Mg(2+). Position 226 (Asp226) interacts with Mg(2+).

It belongs to the selenophosphate synthase 1 family. Class I subfamily. In terms of assembly, homodimer. Mg(2+) is required as a cofactor.

It carries out the reaction hydrogenselenide + ATP + H2O = selenophosphate + AMP + phosphate + 2 H(+). Synthesizes selenophosphate from selenide and ATP. The chain is Selenide, water dikinase from Trichlorobacter lovleyi (strain ATCC BAA-1151 / DSM 17278 / SZ) (Geobacter lovleyi).